The sequence spans 445 residues: Tubulin beta-1 chain (445 aa).

The MREI motif signature appears at 1–4 (MREI). GTP contacts are provided by Gln11, Glu69, Ser138, Gly142, Thr143, Gly144, Asn204, and Asn226. Glu69 contacts Mg(2+). Residues 425-445 (YQDATAEEEGEFEEEGEEELA) are disordered. Residues 429–445 (TAEEEGEFEEEGEEELA) show a composition bias toward acidic residues. At Glu438 the chain carries 5-glutamyl polyglutamate.

It belongs to the tubulin family. In terms of assembly, dimer of alpha and beta chains. A typical microtubule is a hollow water-filled tube with an outer diameter of 25 nm and an inner diameter of 15 nM. Alpha-beta heterodimers associate head-to-tail to form protofilaments running lengthwise along the microtubule wall with the beta-tubulin subunit facing the microtubule plus end conferring a structural polarity. Microtubules usually have 13 protofilaments but different protofilament numbers can be found in some organisms and specialized cells. Mg(2+) serves as cofactor. In terms of processing, some glutamate residues at the C-terminus are polyglycylated, resulting in polyglycine chains on the gamma-carboxyl group. Glycylation is mainly limited to tubulin incorporated into axonemes (cilia and flagella) whereas glutamylation is prevalent in neuronal cells, centrioles, axonemes, and the mitotic spindle. Both modifications can coexist on the same protein on adjacent residues, and lowering polyglycylation levels increases polyglutamylation, and reciprocally. The precise function of polyglycylation is still unclear. Some glutamate residues at the C-terminus are polyglutamylated, resulting in polyglutamate chains on the gamma-carboxyl group. Polyglutamylation plays a key role in microtubule severing by spastin (SPAST). SPAST preferentially recognizes and acts on microtubules decorated with short polyglutamate tails: severing activity by SPAST increases as the number of glutamates per tubulin rises from one to eight, but decreases beyond this glutamylation threshold.

It is found in the cytoplasm. The protein resides in the cytoskeleton. Tubulin is the major constituent of microtubules, a cylinder consisting of laterally associated linear protofilaments composed of alpha- and beta-tubulin heterodimers. Microtubules grow by the addition of GTP-tubulin dimers to the microtubule end, where a stabilizing cap forms. Below the cap, tubulin dimers are in GDP-bound state, owing to GTPase activity of alpha-tubulin. This Gadus morhua (Atlantic cod) protein is Tubulin beta-1 chain.